A 200-amino-acid chain; its full sequence is Elongation factor Ts (200 aa).

Residues 83–86 are involved in Mg(2+) ion dislocation from EF-Tu; sequence TDFA.

Belongs to the EF-Ts family.

The protein resides in the cytoplasm. In terms of biological role, associates with the EF-Tu.GDP complex and induces the exchange of GDP to GTP. It remains bound to the aminoacyl-tRNA.EF-Tu.GTP complex up to the GTP hydrolysis stage on the ribosome. This Syntrophobacter fumaroxidans (strain DSM 10017 / MPOB) protein is Elongation factor Ts.